Here is a 58-residue protein sequence, read N- to C-terminus: COP9 signalosome complex subunit 6b (58 aa).

This sequence belongs to the peptidase M67A family. CSN6 subfamily. As to quaternary structure, component of the CSN complex, probably composed of CSN1, CSN2, CSN3, CSN4, CSN5 (CSN5A or CSN5B), CSN6 (CSN6A or CSN6B), CSN7 and CSN8.

The protein resides in the cytoplasm. The protein localises to the nucleus. Its function is as follows. Component of the COP9 signalosome complex (CSN), a complex involved in various cellular and developmental processes such as photomorphogenesis and auxin and jasmonate responses. The CSN complex is an essential regulator of the ubiquitin (Ubl) conjugation pathway by mediating the deneddylation of the cullin subunits of SCF-type E3 ligase complexes, leading to decrease the Ubl ligase activity of SCF. It is involved in repression of photomorphogenesis in darkness by regulating the activity of COP1-containing Ubl ligase complexes. The sequence is that of COP9 signalosome complex subunit 6b (CSN6B) from Brassica oleracea (Wild cabbage).